We begin with the raw amino-acid sequence, 553 residues long: Methionine--tRNA ligase (553 aa).

Residues 12–22 (PYANSQLHLGH) carry the 'HIGH' region motif. Residues Cys-144, Cys-147, Cys-157, and Cys-160 each contribute to the Zn(2+) site. The 'KMSKS' region signature appears at 332-336 (KFSKS). Lys-335 lines the ATP pocket.

This sequence belongs to the class-I aminoacyl-tRNA synthetase family. MetG type 1 subfamily. Monomer. Zn(2+) is required as a cofactor.

It localises to the cytoplasm. It carries out the reaction tRNA(Met) + L-methionine + ATP = L-methionyl-tRNA(Met) + AMP + diphosphate. In terms of biological role, is required not only for elongation of protein synthesis but also for the initiation of all mRNA translation through initiator tRNA(fMet) aminoacylation. This is Methionine--tRNA ligase from Dehalococcoides mccartyi (strain ATCC BAA-2100 / JCM 16839 / KCTC 5957 / BAV1).